Here is a 224-residue protein sequence, read N- to C-terminus: Beta-casein (224 aa).

A signal peptide spans 1-15 (MKVLILACLVALALA). 4 positions are modified to phosphoserine: S30, S32, S33, and S34.

Belongs to the beta-casein family. As to expression, mammary gland specific. Secreted in milk.

The protein resides in the secreted. Important role in determination of the surface properties of the casein micelles. The polypeptide is Beta-casein (CSN2) (Bubalus bubalis (Domestic water buffalo)).